The chain runs to 264 residues: Hemin import ATP-binding protein HmuV (264 aa).

The ABC transporter domain maps to 10–246 (LQAQNLSYSI…HTLRKWYQAD (237 aa)). Position 42 to 49 (42 to 49 (GPNGAGKS)) interacts with ATP.

It belongs to the ABC transporter superfamily. Heme (hemin) importer (TC 3.A.1.14.5) family. In terms of assembly, the complex is composed of two ATP-binding proteins (HmuV), two transmembrane proteins (HmuU) and a solute-binding protein (HmuT).

It localises to the cell inner membrane. Its function is as follows. Part of the ABC transporter complex HmuTUV involved in hemin import. Responsible for energy coupling to the transport system. This is Hemin import ATP-binding protein HmuV from Photorhabdus laumondii subsp. laumondii (strain DSM 15139 / CIP 105565 / TT01) (Photorhabdus luminescens subsp. laumondii).